We begin with the raw amino-acid sequence, 321 residues long: Methionyl-tRNA formyltransferase (321 aa).

113 to 116 is a binding site for (6S)-5,6,7,8-tetrahydrofolate; that stretch reads SILP.

This sequence belongs to the Fmt family.

The catalysed reaction is L-methionyl-tRNA(fMet) + (6R)-10-formyltetrahydrofolate = N-formyl-L-methionyl-tRNA(fMet) + (6S)-5,6,7,8-tetrahydrofolate + H(+). Attaches a formyl group to the free amino group of methionyl-tRNA(fMet). The formyl group appears to play a dual role in the initiator identity of N-formylmethionyl-tRNA by promoting its recognition by IF2 and preventing the misappropriation of this tRNA by the elongation apparatus. This Pseudoalteromonas translucida (strain TAC 125) protein is Methionyl-tRNA formyltransferase.